Reading from the N-terminus, the 252-residue chain is E3 ubiquitin-protein ligase MARCHF3 (252 aa).

The RING-CH-type zinc-finger motif lies at 62–122; the sequence is SSFNDHPMCR…ELCHFRFSVE (61 aa). Cys70, Cys73, Cys86, Cys88, His96, Cys99, Cys112, and Cys115 together coordinate Zn(2+). 2 consecutive transmembrane segments (helical) span residues 144–164 and 181–201; these read LFGDMVCFLFITPLATISGWL and AVGLIALTVALFTIYLFWTLV.

It localises to the cytoplasmic vesicle membrane. Its subcellular location is the early endosome membrane. The catalysed reaction is S-ubiquitinyl-[E2 ubiquitin-conjugating enzyme]-L-cysteine + [acceptor protein]-L-lysine = [E2 ubiquitin-conjugating enzyme]-L-cysteine + N(6)-ubiquitinyl-[acceptor protein]-L-lysine.. It participates in protein modification; protein ubiquitination. Functionally, E3 ubiquitin-protein ligase which may be involved in endosomal trafficking. E3 ubiquitin ligases accept ubiquitin from an E2 ubiquitin-conjugating enzyme in the form of a thioester and then directly transfer the ubiquitin to targeted substrates. The sequence is that of E3 ubiquitin-protein ligase MARCHF3 (marchf3) from Xenopus laevis (African clawed frog).